The sequence spans 243 residues: Beta-glucanase (243 aa).

Positions 1–27 are cleaved as a signal peptide; sequence MSYRVKRMLMLLVTGLFLSLSTFAASA. The 215-residue stretch at 29–243 folds into the GH16 domain; the sequence is AQTGGSFYEP…SLHWVRYTKR (215 aa). Cys-61 and Cys-90 are disulfide-bonded. The active-site Nucleophile is the Glu-134. Glu-138 (proton donor) is an active-site residue.

The protein belongs to the glycosyl hydrolase 16 family.

It catalyses the reaction Hydrolysis of (1-&gt;4)-beta-D-glucosidic linkages in beta-D-glucans containing (1-&gt;3)- and (1-&gt;4)-bonds.. The chain is Beta-glucanase (bg1) from Bacillus licheniformis.